Reading from the N-terminus, the 428-residue chain is Maltoporin (428 aa).

The N-terminal stretch at 1–21 is a signal peptide; the sequence is MKKTLLAVAIGGAMFATSAAA.

The protein belongs to the porin LamB (TC 1.B.3) family. Homotrimer formed of three 18-stranded antiparallel beta-barrels, containing three independent channels.

The protein localises to the cell outer membrane. It catalyses the reaction beta-maltose(in) = beta-maltose(out). Its function is as follows. Involved in the transport of maltose and maltodextrins. This Mannheimia succiniciproducens (strain KCTC 0769BP / MBEL55E) protein is Maltoporin.